We begin with the raw amino-acid sequence, 84 residues long: Small ribosomal subunit protein uS17c (84 aa).

The protein belongs to the universal ribosomal protein uS17 family. Part of the 30S ribosomal subunit.

Its subcellular location is the plastid. It is found in the chloroplast. In terms of biological role, one of the primary rRNA binding proteins, it binds specifically to the 5'-end of 16S ribosomal RNA. The polypeptide is Small ribosomal subunit protein uS17c (rps17) (Trieres chinensis (Marine centric diatom)).